A 123-amino-acid chain; its full sequence is Small ribosomal subunit protein uS12 (123 aa).

A 3-methylthioaspartic acid modification is found at aspartate 89.

The protein belongs to the universal ribosomal protein uS12 family. In terms of assembly, part of the 30S ribosomal subunit. Contacts proteins S8 and S17. May interact with IF1 in the 30S initiation complex.

Functionally, with S4 and S5 plays an important role in translational accuracy. Its function is as follows. Interacts with and stabilizes bases of the 16S rRNA that are involved in tRNA selection in the A site and with the mRNA backbone. Located at the interface of the 30S and 50S subunits, it traverses the body of the 30S subunit contacting proteins on the other side and probably holding the rRNA structure together. The combined cluster of proteins S8, S12 and S17 appears to hold together the shoulder and platform of the 30S subunit. The polypeptide is Small ribosomal subunit protein uS12 (Nitrobacter winogradskyi (strain ATCC 25391 / DSM 10237 / CIP 104748 / NCIMB 11846 / Nb-255)).